Consider the following 424-residue polypeptide: Inhibin beta A chain (424 aa).

The signal sequence occupies residues 1–20; it reads MPLLWLRGFLLASCWIIVRS. The propeptide occupies 21–308; it reads SPTPGSEGPG…EDHPHRRRRR (288 aa). Asn-165 carries N-linked (GlcNAc...) asparagine glycosylation. Residues 257–288 are disordered; that stretch reads KKKKKEEEGEGKKKDGGDGGAGADEDKEQSHR. The segment covering 261-273 has biased composition (basic and acidic residues); that stretch reads KEEEGEGKKKDGG. 4 cysteine pairs are disulfide-bonded: Cys-312–Cys-320, Cys-319–Cys-389, Cys-348–Cys-421, and Cys-352–Cys-423.

It belongs to the TGF-beta family. In terms of assembly, dimeric, linked by one or more disulfide bonds. Inhibin A is a dimer of alpha/INHA and beta-A/INHBA. Activin A is a homodimer of beta-A/INHBA. Activin AB is a dimer of beta-A/INHBA and beta-B/INHBB. Interacts with FST and FSTL3; these interactions prevent activin A interaction to its type II receptor. Activin A interacts with ACVR2A. Activin A interacts with BMPR2. Inhibin A interacts with ACVR1; this interaction creates a non-signaling complex (NSC) that inhibits ACVR1-mediated BMP signaling. Inhibin A interacts with ACVR2A.

It localises to the secreted. In terms of biological role, inhibins/activins are involved in regulating a number of diverse functions such as hypothalamic and pituitary hormone secretion, gonadal hormone secretion, germ cell development and maturation, erythroid differentiation, insulin secretion, nerve cell survival, embryonic axial development or bone growth, depending on their subunit composition. Activin A is a homodimer of INHBA that plays a role in several essential biological processes including embryonic development, stem cell maintenance and differentiation, haematopoiesis, cell proliferation and tissue fibrosis. Signals through type I (such as ACVR1B or ACVR1C) and type II receptors (such as ACVR2A, ACVR2B or BMPR2) which, upon ligand binding, phosphorylate SMAD2 and SMAD3 intracellular signaling mediators that form a complex with SMAD4, translocate to the nucleus and modulate gene expression. Can also activate alternative non-canonical intracellular signaling pathways including the p38 MAPK, extracellular signal-regulated kinases 1/2 (ERK1/2) and c-Jun N-terminal kinases (JNKs) to modulate cell migration and differentiation. Alternatively, promotes osteoblastic differentiation via ACVRL1-SMAD1/5/9 pathway. In addition, can engage the type I receptor ACVR1 to form an ACVR1-activin A-type II receptor non-signaling complex (NSC) that renders receptors unavailable for engagement with BMPs, hence resulting in an apparent inhibition of ACVR1-mediated BMP signaling. Functionally, inhibin A is a dimer of alpha/INHA and beta-A/INHBA that functions as a feedback regulator in the hypothalamic-pituitary-gonadal (HPG) axis. Inhibits the secretion of FSH from the anterior pituitary gland by acting on pituitary gonadotrope cells. Antagonizes activin A by binding to the proteoglycan, betaglycan, and forming a stable complex with and, thereby, sequestering type II activin receptors while excluding type I receptor. The protein is Inhibin beta A chain (INHBA) of Felis catus (Cat).